Reading from the N-terminus, the 382-residue chain is Serine/arginine-rich splicing factor SR45a (382 aa).

Low complexity-rich tracts occupy residues 30 to 45 (PMSY…SLSP), 54 to 68 (VSRS…SVSS), 177 to 195 (PSYS…SRSY), and 202 to 219 (SYSP…YSPF). 2 disordered regions span residues 30–76 (PMSY…PGNS) and 150–382 (KARR…SVSP). A compositionally biased stretch (basic and acidic residues) spans 288 to 316 (RARDRSCSPYYRGRDRSYSPHYQGRDRSY). Residues 329-343 (VSGSVSPGGRSMSRS) are compositionally biased toward low complexity. The span at 345 to 361 (SPRKGRKESRSKSRRHD) shows a compositional bias: basic residues. Residues 364-382 (SSMCHSRSARSSTSRSVSP) show a composition bias toward low complexity.

Belongs to the splicing factor SR family. SR45 subfamily. As to quaternary structure, component of the spliceosome. Homodimer. Interacts with PRP38, SCL28, SR45, RNU1 and U2AF35B. In terms of processing, phosphorylated. Expressed in leaves, stems and roots.

It localises to the nucleus speckle. Probable splicing factor involved in constitutive and/or alternative splicing events. May bridge the 5' and 3' components of the spliceosome. The chain is Serine/arginine-rich splicing factor SR45a (SR45A) from Arabidopsis thaliana (Mouse-ear cress).